A 270-amino-acid polypeptide reads, in one-letter code: Phospholysine phosphohistidine inorganic pyrophosphate phosphatase (270 aa).

Mg(2+)-binding residues include Asp17 and Ser19. Residues 17–19, 54–55, and Lys189 contribute to the substrate site; these read DIS and TN. Residue Asp214 participates in Mg(2+) binding.

Belongs to the HAD-like hydrolase superfamily. In terms of assembly, homodimer. Mg(2+) serves as cofactor. Detected in liver (at protein level).

Its subcellular location is the cytoplasm. The protein resides in the nucleus. The catalysed reaction is diphosphate + H2O = 2 phosphate + H(+). Phosphatase that hydrolyzes imidodiphosphate, 3-phosphohistidine and 6-phospholysine. Has broad substrate specificity and can also hydrolyze inorganic diphosphate, but with lower efficiency. This chain is Phospholysine phosphohistidine inorganic pyrophosphate phosphatase (LHPP), found in Bos taurus (Bovine).